The following is a 409-amino-acid chain: MARQKFDGNKPHVNIGTIGHVDHGKTTLTAAITTALASQGKGKARKYDEIDAAPEEKARGITINTAHVEYETEKRHYAHVDCPGHADYVKNMITGAAQMDGAILVVSAADGPMPQTREHILLAKQVGVPNMVVFLNKEDQIDDADLLELVELEVRELLSKYDFPGDQIPFVSGSALLALESLSSNPKLMRGEDKWVDKILALMDAVDEYIPTPERPIDKSFLMAIEDVFSITGRGTVATGRIERGAIKVGETVELVGLKDTKSTTVTGLEMFQKTLEEGMAGDNIGILLRGVQKTDIERGMVLAKPGSITPHTQFESEVYVLTKDEGGRHTPFFSGYRPQFYVRTTDVTGSIDAFTADDGSNAEMVMPGDRIKMTVSLVHPIAIEQGMRFAIREGGRTIGAGVVSKILK.

Residues 10 to 214 (KPHVNIGTIG…AVDEYIPTPE (205 aa)) enclose the tr-type G domain. Residues 19–26 (GHVDHGKT) form a G1 region. 19–26 (GHVDHGKT) provides a ligand contact to GTP. Mg(2+) is bound at residue Thr26. A G2 region spans residues 60-64 (GITIN). The G3 stretch occupies residues 81-84 (DCPG). Residues 81–85 (DCPGH) and 136–139 (NKED) contribute to the GTP site. Residues 136-139 (NKED) are G4. Positions 174-176 (SAL) are G5.

It belongs to the TRAFAC class translation factor GTPase superfamily. Classic translation factor GTPase family. EF-Tu/EF-1A subfamily.

It is found in the plastid. The protein localises to the cyanelle. The catalysed reaction is GTP + H2O = GDP + phosphate + H(+). Its function is as follows. GTP hydrolase that promotes the GTP-dependent binding of aminoacyl-tRNA to the A-site of ribosomes during protein biosynthesis. In Cyanophora paradoxa, this protein is Elongation factor Tu, cyanelle (tufA).